A 479-amino-acid polypeptide reads, in one-letter code: F-box protein SKIP17 (479 aa).

In terms of domain architecture, F-box spans Asn-92 to Ile-138. Residues Glu-435–Leu-479 form a disordered region. The segment covering Met-437–Met-469 has biased composition (acidic residues).

In terms of assembly, part of a SCF (ASK-cullin-F-box) protein ligase complex. Interacts with SPK1B/ASK2.

The protein resides in the nucleus. It participates in protein modification; protein ubiquitination. Its function is as follows. Component of SCF(ASK-cullin-F-box) E3 ubiquitin ligase complexes, which may mediate the ubiquitination and subsequent proteasomal degradation of target proteins. In Arabidopsis thaliana (Mouse-ear cress), this protein is F-box protein SKIP17 (SKIP17).